Here is a 426-residue protein sequence, read N- to C-terminus: DNA primase DnaG (426 aa).

Residues 171 to 245 enclose the Toprim domain; that stretch reads DTVILVEGRA…KVDFVARAPP (75 aa). Mg(2+) is bound by residues Glu-177, Asp-219, and Asp-221. Residues 407-426 form a disordered region; that stretch reads KSEENIQESVSTGESAQTSP. Positions 413-426 are enriched in polar residues; that stretch reads QESVSTGESAQTSP.

The protein belongs to the archaeal DnaG primase family. Forms a ternary complex with MCM helicase and DNA. Component of the archaeal exosome complex. Mg(2+) serves as cofactor.

It carries out the reaction ssDNA + n NTP = ssDNA/pppN(pN)n-1 hybrid + (n-1) diphosphate.. Its function is as follows. RNA polymerase that catalyzes the synthesis of short RNA molecules used as primers for DNA polymerase during DNA replication. Also part of the exosome, which is a complex involved in RNA degradation. Acts as a poly(A)-binding protein that enhances the interaction between heteromeric, adenine-rich transcripts and the exosome. The polypeptide is DNA primase DnaG (Thermofilum pendens (strain DSM 2475 / Hrk 5)).